The chain runs to 351 residues: AA9 family lytic polysaccharide monooxygenase A (351 aa).

Residue histidine 1 coordinates Cu(2+). Residues cysteine 52 and cysteine 178 are joined by a disulfide bond. The N-linked (GlcNAc...) asparagine glycan is linked to asparagine 53. Position 86 (histidine 86) interacts with Cu(2+). N-linked (GlcNAc...) asparagine glycosylation is present at asparagine 138. O2-binding residues include histidine 164 and glutamine 173. Tyrosine 175 is a Cu(2+) binding site. Serine 280 carries GPI-anchor amidated serine lipidation. The propeptide at 281 to 351 is removed in mature form; the sequence is SAIGTSTASS…RSGTLGRLSF (71 aa).

It belongs to the polysaccharide monooxygenase AA9 family. Cu(2+) serves as cofactor.

The protein localises to the cell membrane. The catalysed reaction is [(1-&gt;4)-beta-D-glucosyl]n+m + reduced acceptor + O2 = 4-dehydro-beta-D-glucosyl-[(1-&gt;4)-beta-D-glucosyl]n-1 + [(1-&gt;4)-beta-D-glucosyl]m + acceptor + H2O.. Its function is as follows. Lytic polysaccharide monooxygenase (LPMO) that depolymerizes crystalline and amorphous polysaccharides via the oxidation of scissile alpha- or beta-(1-4)-glycosidic bonds, yielding C1 or C4 oxidation products. Catalysis by LPMOs requires the reduction of the active-site copper from Cu(II) to Cu(I) by a reducing agent and H(2)O(2) or O(2) as a cosubstrate. In terms of biological role, has broad specificity, cleaving at any position along the beta-glucan backbone of xyloglucan, regardless of substitutions. Shows minor activity on glucomannan. This Gloeophyllum trabeum (Brown rot fungus) protein is AA9 family lytic polysaccharide monooxygenase A.